The following is a 664-amino-acid chain: E3 ubiquitin-protein ligase RNF139 (664 aa).

N-acetylalanine is present on Ala2. 12 consecutive transmembrane segments (helical) span residues Ile51–Leu71, Ala85–Phe105, Ser125–Leu145, Leu154–Ile174, Leu178–Leu198, Gly293–Ile313, Leu323–Leu343, Met356–Met376, Phe390–Leu410, Leu420–Val440, Ser469–Phe489, and Ile495–Ala512. The segment at Cys547–His586 adopts an RING-type; atypical zinc-finger fold. The interval Val601–Asp664 is disordered. Basic and acidic residues predominate over residues Glu616–Glu628. Residues Leu629–Asp639 show a composition bias toward acidic residues. Position 634 is a phosphoserine (Ser634). Thr635 and Thr663 each carry phosphothreonine.

Interacts with MHC class I and HM13. Interacts with VHL. Component of SCAP-SREBP complex composed of SREBF2, SCAP and RNF139; the complex hampers the interaction between SCAP and SEC24B, thereby reducing SREBF2 proteolytic processing. Interacts with SREBF2 (via C-terminal domain). Interacts with SCAP; the interaction inhibits the interaction of SCAP with SEC24B and hampering the ER to Golgi transport of the SCAP-SREBP complex. Interacts with SEC24B. Interacts with INSIG1 and INSIG2. Interacts with EIF3F and EIF3H; the interaction leads to protein translation inhibitions in a ubiquitination-dependent manner. Interacts with XBP1 isoform 1; the interaction induces ubiquitination and degradation of XBP1 isoform 1. Interacts with AUP1, AMFR and UBE2G2; interaction with AUP1 facilitates interaction of RNF139 with ubiquitin-conjugating enzyme UBE2G2 and ubiquitin ligase AMFR/gp78, leading to sterol-induced ubiquitination of HMGCR and its subsequent proteasomal degradation. In terms of processing, autoubiquitinated. Ubiquitination is induced by sterol and leads to ist degradation via the ubiquitin-proteasome pathway. In terms of tissue distribution, highly expressed in testis, placenta and adrenal gland. Moderate expression in heart, brain, liver, skeletal muscle and pancreas, and low expression in lung and kidney.

The protein localises to the endoplasmic reticulum membrane. It carries out the reaction S-ubiquitinyl-[E2 ubiquitin-conjugating enzyme]-L-cysteine + [acceptor protein]-L-lysine = [E2 ubiquitin-conjugating enzyme]-L-cysteine + N(6)-ubiquitinyl-[acceptor protein]-L-lysine.. The protein operates within protein modification; protein ubiquitination. E3-ubiquitin ligase; acts as a negative regulator of cell proliferation through mechanisms involving G2/M arrest and cell death. Required for MHC class I ubiquitination in cells expressing the cytomegalovirus protein US2 before dislocation from the endoplasmic reticulum (ER). Affects SREBP processing by hindering the SREBP-SCAP complex translocation from the ER to the Golgi, thereby reducing SREBF2 target gene expression. Involved in the sterol-accelerated degradation of HMGCR. This is achieved through binding of RNF139 to INSIG1 and/or INSIG2 at the ER membrane. In addition, interaction of RNF139 with AUP1 facilitates interaction of RNF139 with ubiquitin-conjugating enzyme UBE2G2 and ubiquitin ligase AMFR, leading to ubiquitination of HMGCR. The ubiquitinated HMGCR is then released from the ER into the cytosol for subsequent destruction. Required for INSIG1 ubiquitination. May be required for EIF3 complex ubiquitination. The sequence is that of E3 ubiquitin-protein ligase RNF139 from Homo sapiens (Human).